The chain runs to 183 residues: Apo-citrate lyase phosphoribosyl-dephospho-CoA transferase (183 aa).

The protein belongs to the CitX family.

The enzyme catalyses apo-[citrate lyase ACP] + 2'-(5''-triphospho-alpha-D-ribosyl)-3'-dephospho-CoA = holo-[citrate lyase ACP] + diphosphate. In terms of biological role, transfers 2-(5''-triphosphoribosyl)-3'-dephosphocoenzyme-A on a serine residue to the apo-acyl carrier protein (gamma chain) of the citrate lyase to yield holo-acyl carrier protein. In Shigella flexneri serotype 5b (strain 8401), this protein is Apo-citrate lyase phosphoribosyl-dephospho-CoA transferase.